Consider the following 101-residue polypeptide: NADH-quinone oxidoreductase subunit K (101 aa).

The next 3 membrane-spanning stretches (helical) occupy residues 5–25 (PNWY…GVLF), 30–50 (IVVL…LVTF), and 62–82 (LVFF…AIVI).

It belongs to the complex I subunit 4L family. In terms of assembly, NDH-1 is composed of 14 different subunits. Subunits NuoA, H, J, K, L, M, N constitute the membrane sector of the complex.

Its subcellular location is the cell inner membrane. It catalyses the reaction a quinone + NADH + 5 H(+)(in) = a quinol + NAD(+) + 4 H(+)(out). In terms of biological role, NDH-1 shuttles electrons from NADH, via FMN and iron-sulfur (Fe-S) centers, to quinones in the respiratory chain. The immediate electron acceptor for the enzyme in this species is believed to be a menaquinone. Couples the redox reaction to proton translocation (for every two electrons transferred, four hydrogen ions are translocated across the cytoplasmic membrane), and thus conserves the redox energy in a proton gradient. This is NADH-quinone oxidoreductase subunit K from Salinibacter ruber (strain DSM 13855 / M31).